The chain runs to 375 residues: Alanine racemase (375 aa).

Residue K38 is the Proton acceptor; specific for D-alanine of the active site. K38 carries the post-translational modification N6-(pyridoxal phosphate)lysine. R137 provides a ligand contact to substrate. Y266 functions as the Proton acceptor; specific for L-alanine in the catalytic mechanism. M314 is a binding site for substrate.

This sequence belongs to the alanine racemase family. It depends on pyridoxal 5'-phosphate as a cofactor.

The catalysed reaction is L-alanine = D-alanine. Its pathway is amino-acid biosynthesis; D-alanine biosynthesis; D-alanine from L-alanine: step 1/1. Functionally, catalyzes the interconversion of L-alanine and D-alanine. May also act on other amino acids. The protein is Alanine racemase (alr) of Cutibacterium acnes (strain DSM 16379 / KPA171202) (Propionibacterium acnes).